Here is a 1041-residue protein sequence, read N- to C-terminus: Desmoglein-4 (1041 aa).

The first 23 residues, 1-23, serve as a signal peptide directing secretion; sequence MDWLLFRNICLLILFMVVLGVNS. A propeptide spanning residues 24–49 is cleaved from the precursor; sequence EFIVEVKELDIENGTTTWQTVRRQKR. Cadherin domains lie at 50 to 157, 158 to 269, 270 to 385, and 389 to 497; these read EWIK…PPVF, TQNV…FPIL, EKTS…GPTF, and SMTF…CPVI. Residues 50–634 are Extracellular-facing; it reads EWIKFAAACR…RQSNVGLGPA (585 aa). Asn-110 is a glycosylation site (N-linked (GlcNAc...) asparagine). Residue Asn-545 is glycosylated (N-linked (GlcNAc...) asparagine). A helical membrane pass occupies residues 635–655; the sequence is GIGMIILGLLLLLLSPLLLLM. Topologically, residues 656–1041 are cytoplasmic; that stretch reads CCCKRRQPEG…RYSNMHYSRQ (386 aa). Desmoglein repeat repeat units lie at residues 884–910 and 911–941; these read TLSE…IVTE and TYTT…ETVM. Residues 1014 to 1041 form a disordered region; that stretch reads ISQTTGSTSPMTSQHRVTRYSNMHYSRQ.

In terms of assembly, interacts with JUP. Strongly expressed in the skin; during the anagen stage of hair follicles in the matrix, precortex and inner rooth sheath.

It is found in the cell membrane. It localises to the cell junction. The protein localises to the desmosome. Functionally, a component of desmosome cell-cell junctions which are required for positive regulation of cellular adhesion. Coordinates the transition from proliferation to differentiation in hair follicle keratinocytes. Plays a role in moderating lymphocyte migration to inflamed skin and maintaining homeostasis of the epidermal inflammatory response. This chain is Desmoglein-4 (Dsg4), found in Mus musculus (Mouse).